The chain runs to 709 residues: Kelch domain-containing protein STK_09390 (709 aa).

Positions M1–A22 are cleaved as a signal peptide. Kelch repeat units follow at residues K49–N94, L96–Y140, K141–S192, A193–G240, M242–G288, and K290–A340. 4 Fibronectin type-III domains span residues P315–P405, P406–A488, N489–I566, and P568–R643.

This is Kelch domain-containing protein STK_09390 from Sulfurisphaera tokodaii (strain DSM 16993 / JCM 10545 / NBRC 100140 / 7) (Sulfolobus tokodaii).